The sequence spans 554 residues: Hydroxylamine reductase (554 aa).

The [2Fe-2S] cluster site is built by Cys3, Cys6, Cys18, and Cys25. Hybrid [4Fe-2O-2S] cluster contacts are provided by His252, Glu276, Cys320, Cys408, Cys436, Cys461, Glu495, and Lys497. Residue Cys408 is modified to Cysteine persulfide.

The protein belongs to the HCP family. Requires [2Fe-2S] cluster as cofactor. The cofactor is hybrid [4Fe-2O-2S] cluster.

It localises to the cytoplasm. The enzyme catalyses A + NH4(+) + H2O = hydroxylamine + AH2 + H(+). Catalyzes the reduction of hydroxylamine to form NH(3) and H(2)O. The sequence is that of Hydroxylamine reductase from Shewanella amazonensis (strain ATCC BAA-1098 / SB2B).